A 574-amino-acid chain; its full sequence is Pyruvate kinase PKLR (574 aa).

Residues Ser-2, Ser-19, Ser-26, and Ser-43 each carry the phosphoserine modification. Substrate is bound at residue Arg-116. Residues Asn-118, Ser-120, Asp-156, and Thr-157 each contribute to the K(+) site. 118-121 (NFSH) provides a ligand contact to ATP. ATP is bound by residues Arg-163 and Lys-250. Ser-292 is subject to Phosphoserine. Substrate is bound at residue Lys-313. Glu-315 is a Mn(2+) binding site. Residues Gly-338, Asp-339, and Thr-371 each coordinate substrate. Residue Asp-339 coordinates Mn(2+). Residues 475–480 (TTTGRS), Trp-525, Arg-532, and 559–564 (RPGSGY) each bind beta-D-fructose 1,6-bisphosphate.

The protein belongs to the pyruvate kinase family. As to quaternary structure, homotetramer. Mg(2+) is required as a cofactor. Requires Mn(2+) as cofactor. The cofactor is K(+).

The catalysed reaction is pyruvate + ATP = phosphoenolpyruvate + ADP + H(+). Its pathway is carbohydrate degradation; glycolysis; pyruvate from D-glyceraldehyde 3-phosphate: step 5/5. With respect to regulation, allosterically activated by fructose 1,6-bisphosphate. Functionally, pyruvate kinase that catalyzes the conversion of phosphoenolpyruvate to pyruvate with the synthesis of ATP, and which plays a key role in glycolysis. The sequence is that of Pyruvate kinase PKLR (PKLR) from Homo sapiens (Human).